The sequence spans 418 residues: Thyroid hormone receptor alpha-B (418 aa).

The interval 1–40 (MDQNLSGLDCLSEPDEKRWPDGKRKRKNSQCMGKSGMSGD) is disordered. Positions 1–60 (MDQNLSGLDCLSEPDEKRWPDGKRKRKNSQCMGKSGMSGDSLVSLPPAGYIPSYLDKDEP) are modulating. 2 consecutive NR C4-type zinc fingers follow at residues 61–81 (CVVC…CEGC) and 99–123 (CKYD…FKKC). The segment at residues 61-128 (CVVCSDKATG…RFKKCIAVGM (68 aa)) is a DNA-binding region (nuclear receptor). The region spanning 171-415 (EEWELIRIVT…PPLFLEVFED (245 aa)) is the NR LBD domain.

It belongs to the nuclear hormone receptor family. NR1 subfamily. In terms of assembly, binds to thyroid hormone receptor element (TRE) weakly as homodimers and monomers, but binds TRE with much higher affinity as heterodimers with retinoid X receptors. Can bind DNA as a heterodimer with either rxra or rxrg.

It is found in the nucleus. Functionally, high affinity receptor for triiodothyronine (T3). The sequence is that of Thyroid hormone receptor alpha-B (thra-b) from Xenopus laevis (African clawed frog).